Here is a 763-residue protein sequence, read N- to C-terminus: Phosphoglycerol transferase I (763 aa).

Helical transmembrane passes span M1–A21, W26–F46, I77–I97, and F108–F128.

This sequence belongs to the OpgB family.

It is found in the cell inner membrane. The enzyme catalyses a phosphatidylglycerol + a membrane-derived-oligosaccharide D-glucose = a 1,2-diacyl-sn-glycerol + a membrane-derived-oligosaccharide 6-(glycerophospho)-D-glucose.. The protein operates within glycan metabolism; osmoregulated periplasmic glucan (OPG) biosynthesis. Functionally, transfers a phosphoglycerol residue from phosphatidylglycerol to the membrane-bound nascent glucan backbones. This Escherichia coli O139:H28 (strain E24377A / ETEC) protein is Phosphoglycerol transferase I.